A 214-amino-acid polypeptide reads, in one-letter code: DELTA-actitoxin-Aeq1a (214 aa).

An N-terminal signal peptide occupies residues 1-19 (MSRLIIVFIVVTMICSATA). Residues 20-35 (LPSKKIIDEDEEDEKR) constitute a propeptide that is removed on maturation. A plays an important role in the hemolytic activity region spans residues 38–47 (DVAGAVIDGA). Positions 46–65 (GASLSFDILKTVLEALGNVK) are N-terminal region. Phosphocholine contacts are provided by Ser-89, Val-122, Ser-140, Pro-142, Tyr-168, Tyr-172, and Tyr-173. Residues 140–155 (SVPYDYNWYSNWWNVR) are trp-rich region, which is important for the binding to lipid membrane. The short motif at 179 to 181 (RGD) is the Cell attachment site, crucial for protein stability element.

It belongs to the actinoporin family. Sea anemone subfamily. Octamer or nonamer in membranes. Monomer in the soluble state.

The protein localises to the secreted. The protein resides in the nematocyst. It localises to the target cell membrane. Its function is as follows. Pore-forming protein that forms cations-selective hydrophilic pores of around 1 nm and causes cardiac stimulation and cytolysis. Pore formation is a multi-step process that involves specific recognition of membrane sphingomyelin (but neither cholesterol nor phosphatidylcholine) using aromatic rich region and adjacent phosphocholine (POC) binding site, firm binding to the membrane (mainly driven by hydrophobic interactions) accompanied by the transfer of the N-terminal region to the lipid-water interface and finally pore formation after oligomerization of monomers. Cytolytic effects include red blood cells hemolysis, platelet aggregation and lysis, cytotoxic and cytostatic effects on fibroblasts. Lethality in mammals has been ascribed to severe vasospasm of coronary vessels, cardiac arrhythmia, and inotropic effects. This chain is DELTA-actitoxin-Aeq1a, found in Actinia equina (Beadlet anemone).